The chain runs to 305 residues: Protoheme IX farnesyltransferase 1 (305 aa).

Transmembrane regions (helical) follow at residues 22–42 (IKTGIIKSNLVPMFAGLTLAL), 53–73 (IPEILFAFIGSILIIGAAGAF), 94–114 (VTGDISPKTALWLGIFMTIFG), 115–135 (LVFLALTTYLAAILGFIGLFL), 154–174 (IGSVSGAMPPLIGWAAIYPDV), 179–199 (IIGLFIIMIIWQMPHFYAIAI), 230–250 (LVILIIISILLGSLSIGLMLV), and 283–303 (LFHMTILFSTVIIYSLVGIFF).

It belongs to the UbiA prenyltransferase family. Protoheme IX farnesyltransferase subfamily. Interacts with CtaA.

The protein localises to the cell membrane. It catalyses the reaction heme b + (2E,6E)-farnesyl diphosphate + H2O = Fe(II)-heme o + diphosphate. The protein operates within porphyrin-containing compound metabolism; heme O biosynthesis; heme O from protoheme: step 1/1. Its function is as follows. Converts heme B (protoheme IX) to heme O by substitution of the vinyl group on carbon 2 of heme B porphyrin ring with a hydroxyethyl farnesyl side group. In Bacillus cytotoxicus (strain DSM 22905 / CIP 110041 / 391-98 / NVH 391-98), this protein is Protoheme IX farnesyltransferase 1.